Reading from the N-terminus, the 203-residue chain is Excretory canal abnormal exc-13 (203 aa).

The first 20 residues, 1–20 (MIGFLKFALIGTVLLGVANG), serve as a signal peptide directing secretion. N-linked (GlcNAc...) asparagine glycosylation is found at asparagine 32, asparagine 84, and asparagine 188.

This sequence belongs to the UPF0376 family.

The protein localises to the secreted. The sequence is that of Excretory canal abnormal exc-13 from Caenorhabditis elegans.